Reading from the N-terminus, the 174-residue chain is Peptide deformylase (174 aa).

Fe cation-binding residues include Cys94 and His136. Glu137 is an active-site residue. His140 lines the Fe cation pocket.

It belongs to the polypeptide deformylase family. Requires Fe(2+) as cofactor.

It catalyses the reaction N-terminal N-formyl-L-methionyl-[peptide] + H2O = N-terminal L-methionyl-[peptide] + formate. Removes the formyl group from the N-terminal Met of newly synthesized proteins. Requires at least a dipeptide for an efficient rate of reaction. N-terminal L-methionine is a prerequisite for activity but the enzyme has broad specificity at other positions. This Maricaulis maris (strain MCS10) (Caulobacter maris) protein is Peptide deformylase.